The sequence spans 447 residues: Tubulin beta chain (447 aa).

Positions 11, 69, 138, 142, 143, 144, 204, and 226 each coordinate GTP. Glu69 contributes to the Mg(2+) binding site. The interval 427 to 447 (EAHMDDEEAEEAYEDEAPPEE) is disordered. A compositionally biased stretch (acidic residues) spans 430-447 (MDDEEAEEAYEDEAPPEE).

This sequence belongs to the tubulin family. In terms of assembly, dimer of alpha and beta chains. A typical microtubule is a hollow water-filled tube with an outer diameter of 25 nm and an inner diameter of 15 nM. Alpha-beta heterodimers associate head-to-tail to form protofilaments running lengthwise along the microtubule wall with the beta-tubulin subunit facing the microtubule plus end conferring a structural polarity. Microtubules usually have 13 protofilaments but different protofilament numbers can be found in some organisms and specialized cells. The cofactor is Mg(2+).

It localises to the cytoplasm. It is found in the cytoskeleton. Tubulin is the major constituent of microtubules, a cylinder consisting of laterally associated linear protofilaments composed of alpha- and beta-tubulin heterodimers. Microtubules grow by the addition of GTP-tubulin dimers to the microtubule end, where a stabilizing cap forms. Below the cap, tubulin dimers are in GDP-bound state, owing to GTPase activity of alpha-tubulin. The polypeptide is Tubulin beta chain (TBB1) (Uromyces fabae (Rust fungus)).